Consider the following 37-residue polypeptide: Large ribosomal subunit protein bL36 (37 aa).

Belongs to the bacterial ribosomal protein bL36 family.

This chain is Large ribosomal subunit protein bL36, found in Deinococcus deserti (strain DSM 17065 / CIP 109153 / LMG 22923 / VCD115).